The following is a 104-amino-acid chain: Large ribosomal subunit protein uL24 (104 aa).

Belongs to the universal ribosomal protein uL24 family. As to quaternary structure, part of the 50S ribosomal subunit.

Its function is as follows. One of two assembly initiator proteins, it binds directly to the 5'-end of the 23S rRNA, where it nucleates assembly of the 50S subunit. One of the proteins that surrounds the polypeptide exit tunnel on the outside of the subunit. The sequence is that of Large ribosomal subunit protein uL24 from Shewanella halifaxensis (strain HAW-EB4).